Reading from the N-terminus, the 606-residue chain is MARSADRSAEDGDSRAGIRELSLEEVLKSYEQPINEEQAWAVCFQCCGDLRAPRPQPHPRRPELQIRDPASIILHRDGRVTALLQSCDDSNAGCESAADGKLVQSLGVAIYRALDWGLDDSEERELSPQLEQLIEFMVGGPDCGQSKHCGSNAAKDEGYSGQDEEEEEEEEEEEEGAGRGIHTVQQVMTMCASRLANPVLAPEHYQAVCRALFLETLELQTFLSRIRDAKEMLKKIRKEEPQEDSAAELDALQHTDWARLWVQLMKELRQGVKLKKVEEQPFNPLPTEFSLTPFEMLMQDIRLRKYKLRKVVVDGNIPTCVKRNAHELILDFIRSRPPLKPVSERSLPPPPQRPQSLHDRVLAEIRQDHKLRPVELPSSKRSFGSLPCLAHTCQCDIKSTSCIDLSVTGAGSRPSSRIRVLLKAPTLAEMEEMNIFEDEDSPDGVDMRRVESSPTPLKRDRSFSEHDLDELRGEMMSDSPQHSGVAALRAERPRSHTLTGVYQASFPGFERRSASTCRSLSSDDRSSDPGGDSASHGLSRHQWMEEFCHPVETLALTVDGVINVRRILVKAEMEKYMQNKELFSNLKKGKVCVSLSYMIDISPTAQ.

A KIND domain is found at 21-219; that stretch reads LSLEEVLKSY…RALFLETLEL (199 aa). The disordered stretch occupies residues 147-181; sequence KHCGSNAAKDEGYSGQDEEEEEEEEEEEEGAGRGI. Acidic residues predominate over residues 162–175; that stretch reads QDEEEEEEEEEEEE. 2 WH2 domains span residues 263–277 and 357–374; these read QLMKELRQGVKLKKV and LHDRVLAEIRQDHKLRPV. 2 disordered regions span residues 438–464 and 517–537; these read DEDSPDGVDMRRVESSPTPLKRDRSFS and CRSLSSDDRSSDPGGDSASHG. Basic and acidic residues predominate over residues 445–464; the sequence is VDMRRVESSPTPLKRDRSFS. The tract at residues 554 to 574 is spir-box; sequence LALTVDGVINVRRILVKAEME.

Belongs to the spire family.

The protein localises to the cytoplasm. It is found in the cytoskeleton. The protein resides in the cytosol. It localises to the cell membrane. Its subcellular location is the cytoplasmic vesicle membrane. Functionally, acts as an actin nucleation factor, remains associated with the slow-growing pointed end of the new filament. Involved in intracellular vesicle transport along actin fibers, providing a novel link between actin cytoskeleton dynamics and intracellular transport. Required for asymmetric spindle positioning and asymmetric cell division during oocyte meiosis. Required for normal formation of the cleavage furrow and for polar body extrusion during female germ cell meiosis. Also acts in the nucleus: together with SPIRE1 and SPIRE2, promotes assembly of nuclear actin filaments in response to DNA damage in order to facilitate movement of chromatin and repair factors after DNA damage. The polypeptide is Protein spire homolog 2 (spire2) (Danio rerio (Zebrafish)).